The following is a 337-amino-acid chain: Lipoate-protein ligase A (337 aa).

Positions 29–216 (DQNQTILFLW…AFFNYYQTTV (188 aa)) constitute a BPL/LPL catalytic domain. ATP is bound by residues R71, 76 to 79 (GAVF), and K134. K134 provides a ligand contact to (R)-lipoate.

The protein belongs to the LplA family. In terms of assembly, monomer.

It is found in the cytoplasm. The enzyme catalyses L-lysyl-[lipoyl-carrier protein] + (R)-lipoate + ATP = N(6)-[(R)-lipoyl]-L-lysyl-[lipoyl-carrier protein] + AMP + diphosphate + H(+). Its pathway is protein modification; protein lipoylation via exogenous pathway; protein N(6)-(lipoyl)lysine from lipoate: step 1/2. It participates in protein modification; protein lipoylation via exogenous pathway; protein N(6)-(lipoyl)lysine from lipoate: step 2/2. Its function is as follows. Catalyzes both the ATP-dependent activation of exogenously supplied lipoate to lipoyl-AMP and the transfer of the activated lipoyl onto the lipoyl domains of lipoate-dependent enzymes. This Blochmanniella floridana protein is Lipoate-protein ligase A.